Consider the following 109-residue polypeptide: Period circadian protein (109 aa).

2 stretches are compositionally biased toward polar residues: residues Gln42 to Pro56 and Ser68 to Met80. The tract at residues Gln42–Lys109 is disordered. Over residues Gly81–Ser97 the composition is skewed to low complexity.

In terms of assembly, forms a heterodimer with timeless (TIM); the complex then translocates into the nucleus. Post-translationally, phosphorylated with a circadian rhythmicity, probably by the double-time protein (dbt). Phosphorylation could be implicated in the stability of per monomer and in the formation of heterodimer per-tim.

It is found in the nucleus. It localises to the cytoplasm. The protein localises to the perinuclear region. Functionally, essential for biological clock functions. Determines the period length of circadian and ultradian rhythms; an increase in PER dosage leads to shortened circadian rhythms and a decrease leads to lengthened circadian rhythms. Essential for the circadian rhythmicity of locomotor activity, eclosion behavior, and for the rhythmic component of the male courtship song that originates in the thoracic nervous system. The biological cycle depends on the rhythmic formation and nuclear localization of the TIM-PER complex. Light induces the degradation of TIM, which promotes elimination of PER. Nuclear activity of the heterodimer coordinatively regulates PER and TIM transcription through a negative feedback loop. Behaves as a negative element in circadian transcriptional loop. Does not appear to bind DNA, suggesting indirect transcriptional inhibition. The sequence is that of Period circadian protein (per) from Musca domestica (House fly).